The sequence spans 298 residues: Zinc-alpha-2-glycoprotein (298 aa).

The N-terminal stretch at 1–20 (MVRMVPVLLSLLLLLGPAVP) is a signal peptide. At Gln21 the chain carries Pyrrolidone carboxylic acid. The N-linked (GlcNAc...) (complex) asparagine glycan is linked to Asn109. Asn112 is a glycosylation site (N-linked (GlcNAc...) asparagine). 2 disulfide bridges follow: Cys123-Cys186 and Cys225-Cys280. Residue Asn128 is glycosylated (N-linked (GlcNAc...) (complex) asparagine). The 86-residue stretch at 207–292 (PSVVVTSHQA…QHSSLAQPLV (86 aa)) folds into the Ig-like C1-type domain. Asn259 is a glycosylation site (N-linked (GlcNAc...) asparagine).

The protein belongs to the MHC class I family. In terms of assembly, interacts with PIP. N-glycosylated. N-glycan at Asn-128: Hex5HexNAc4. Blood plasma, seminal plasma, urine, saliva, sweat, epithelial cells of various human glands, liver.

Its subcellular location is the secreted. In terms of biological role, stimulates lipid degradation in adipocytes and causes the extensive fat losses associated with some advanced cancers. May bind polyunsaturated fatty acids. This chain is Zinc-alpha-2-glycoprotein (AZGP1), found in Homo sapiens (Human).